Consider the following 234-residue polypeptide: Lipoprotein-releasing system ATP-binding protein LolD (234 aa).

Residues 13–233 (IYLHEIKRQY…SLSDGQVVEL (221 aa)) form the ABC transporter domain. 49–56 (APSGSGKS) provides a ligand contact to ATP.

The protein belongs to the ABC transporter superfamily. Lipoprotein translocase (TC 3.A.1.125) family. In terms of assembly, the complex is composed of two ATP-binding proteins (LolD) and two transmembrane proteins (LolC and LolE).

The protein localises to the cell inner membrane. Part of the ABC transporter complex LolCDE involved in the translocation of mature outer membrane-directed lipoproteins, from the inner membrane to the periplasmic chaperone, LolA. Responsible for the formation of the LolA-lipoprotein complex in an ATP-dependent manner. The protein is Lipoprotein-releasing system ATP-binding protein LolD of Bradyrhizobium diazoefficiens (strain JCM 10833 / BCRC 13528 / IAM 13628 / NBRC 14792 / USDA 110).